The following is a 683-amino-acid chain: MALSKRELDELKPWIEKTVKRVLGFSEPTVVTAALNCVGKGMDKKKAADHLKPFLDDSTLRFVDKLFEAVEEGRSSRHSKSSSDRSRKRELKEVFGDDSEISKESSGVKKRRIPRFEEVEEEPEVIPGPPSESPGMLTKLQIKQMMEAATRQIEERKKQLSFISPPTPQPKTPSSSQPERLPIGNTIQPSQAATFMNDAIEKARKAAELQARIQAQLALKPGLIGNANMVGLANLHAMGIAPPKVELKDQTKPTPLILDEQGRTVDATGKEIELTHRMPTLKANIRAVKREQFRQQLKEKPSEDMESNTFFDPRVSIAPSQRQRRTFKFHDKGKFEKIAQRLRTKAQLEKLQAEISQAARKTGIHTSTRLALIAPKKELKEGDIPEIEWWDSYIIPNGFDLTEENPKREDYFGITNLVEHPAQLNPPVDNDTPVTLGVYLTKKEQKKLRRQTRREAQKELQEKVRLGLMPPPEPKVRISNLMRVLGTEAVQDPTKVEAHVRAQMAKRQKAHEEANAARKLTAEQRKVKKIKKLKEDISQGVHISVYRVRNLSNPAKKFKIEANAGQLYLTGVVVLHKDVNVVVVEGGPKAQKKFKRLMLHRIKWDEQTSNTKGDDDEESDEEAVKKTNKCVLVWEGTAKDRSFGEMKFKQCPTENMAREHFKKHGAEHYWDLALSESVLESTD.

The 87-residue stretch at 1–87 (MALSKRELDE…HSKSSSDRSR (87 aa)) folds into the PWI domain. The span at 73–107 (GRSSRHSKSSSDRSRKRELKEVFGDDSEISKESSG) shows a compositional bias: basic and acidic residues. The interval 73–135 (GRSSRHSKSS…IPGPPSESPG (63 aa)) is disordered. Lysine 139 participates in a covalent cross-link: Glycyl lysine isopeptide (Lys-Gly) (interchain with G-Cter in SUMO2). Residues 153-183 (IEERKKQLSFISPPTPQPKTPSSSQPERLPI) form a disordered region. Serine 164 carries the phosphoserine modification. Threonine 167 carries the phosphothreonine modification. Glycyl lysine isopeptide (Lys-Gly) (interchain with G-Cter in SUMO2) cross-links involve residues lysine 244 and lysine 252. Residues 416-550 (NLVEHPAQLN…VHISVYRVRN (135 aa)) form a mediates interaction with SART3 region. Serine 619 carries the phosphoserine modification.

Component of the precatalytic spliceosome (spliceosome B complex). Component of the U4/U6-U5 tri-snRNP complex, a building block of the precatalytic spliceosome (spliceosome B complex). The U4/U6-U5 tri-snRNP complex is composed of the U4, U6 and U5 snRNAs and at least PRPF3, PRPF4, PRPF6, PRPF8, PRPF31, SNRNP200, TXNL4A, SNRNP40, SNRPB, SNRPD1, SNRPD2, SNRPD3, SNRPE, SNRPF, SNRPG, DDX23, CD2BP2, PPIH, SNU13, EFTUD2, SART1 and USP39, plus LSM2, LSM3, LSM4, LSM5, LSM6, LSM7 and LSM8. Interacts directly with PRPF4. Part of a heteromeric complex containing PPIH, PRPF3 and PRPF4 that is stable in the absence of RNA. Interacts with SART3; the interaction is direct and recruits the deubiquitinase USP4 to PRPF3. Interacts with PRPF19. Interacts ('Lys-63'-linked polyubiquitinated) with PRPF8 (via the MPN (JAB/Mov34) domain); may stabilize the U4/U6-U5 tri-snRNP complex. Interacts with ERCC6. Post-translationally, ubiquitinated. Undergoes 'Lys-63'-linked polyubiquitination by PRPF19 and deubiquitination by USP4. 'Lys-63'-linked ubiquitination increases the affinity for PRPF8 and may regulate the assembly of the U4/U6-U5 tri-snRNP complex.

The protein localises to the nucleus. Its subcellular location is the nucleus speckle. Its function is as follows. Plays a role in pre-mRNA splicing as component of the U4/U6-U5 tri-snRNP complex that is involved in spliceosome assembly, and as component of the precatalytic spliceosome (spliceosome B complex). This Pongo abelii (Sumatran orangutan) protein is U4/U6 small nuclear ribonucleoprotein Prp3 (PRPF3).